The primary structure comprises 84 residues: GTP cyclohydrolase 1 feedback regulatory protein (84 aa).

This sequence belongs to the GFRP family. As to quaternary structure, homopentamer. Forms a complex with GCH1 where a GCH1 homodecamer is sandwiched by two GFRP homopentamers.

Its subcellular location is the nucleus. It is found in the nucleus membrane. It localises to the cytoplasm. The protein localises to the cytosol. Mediates tetrahydrobiopterin inhibition of GTP cyclohydrolase 1. The chain is GTP cyclohydrolase 1 feedback regulatory protein (gchfr) from Xenopus tropicalis (Western clawed frog).